The sequence spans 429 residues: Glutamate-1-semialdehyde 2,1-aminomutase (429 aa).

N6-(pyridoxal phosphate)lysine is present on lysine 265.

This sequence belongs to the class-III pyridoxal-phosphate-dependent aminotransferase family. HemL subfamily. In terms of assembly, homodimer. Pyridoxal 5'-phosphate serves as cofactor.

The protein localises to the cytoplasm. The enzyme catalyses (S)-4-amino-5-oxopentanoate = 5-aminolevulinate. The protein operates within porphyrin-containing compound metabolism; protoporphyrin-IX biosynthesis; 5-aminolevulinate from L-glutamyl-tRNA(Glu): step 2/2. In Shewanella halifaxensis (strain HAW-EB4), this protein is Glutamate-1-semialdehyde 2,1-aminomutase.